A 64-amino-acid chain; its full sequence is Translation machinery-associated protein 7 homolog (64 aa).

The interval 1-64 is disordered; it reads MSGREGGKKK…QGGIKKSGKK (64 aa). Over residues 27–44 the composition is skewed to basic and acidic residues; it reads VAFKQKQKEQQKALDAAK.

The protein belongs to the TMA7 family.

The sequence is that of Translation machinery-associated protein 7 homolog from Anopheles funestus (African malaria mosquito).